The chain runs to 145 residues: CBS domain-containing protein DDB_G0289609 (145 aa).

CBS domains are found at residues 9 to 66 (MSKS…FLPE) and 84 to 141 (MKQN…LEPV).

This Dictyostelium discoideum (Social amoeba) protein is CBS domain-containing protein DDB_G0289609.